Consider the following 201-residue polypeptide: Orotate phosphoribosyltransferase (201 aa).

113–121 (EDIITTGKS) provides a ligand contact to 5-phospho-alpha-D-ribose 1-diphosphate. Thr117 and Arg145 together coordinate orotate.

It belongs to the purine/pyrimidine phosphoribosyltransferase family. PyrE subfamily. Homodimer. Mg(2+) serves as cofactor.

The catalysed reaction is orotidine 5'-phosphate + diphosphate = orotate + 5-phospho-alpha-D-ribose 1-diphosphate. It functions in the pathway pyrimidine metabolism; UMP biosynthesis via de novo pathway; UMP from orotate: step 1/2. Functionally, catalyzes the transfer of a ribosyl phosphate group from 5-phosphoribose 1-diphosphate to orotate, leading to the formation of orotidine monophosphate (OMP). In Helicobacter pylori (strain Shi470), this protein is Orotate phosphoribosyltransferase.